The sequence spans 465 residues: Chromosomal replication initiator protein DnaA (465 aa).

A domain I, interacts with DnaA modulators region spans residues 1-84 (MSLSLWQQCL…RFEVGSKPLV (84 aa)). The domain II stretch occupies residues 84–128 (VQAISQPAQPHHKQVSAAPQQQVRSAPVRPSWDNSPAQAEHTYRS). Residues 91–120 (AQPHHKQVSAAPQQQVRSAPVRPSWDNSPA) are disordered. Residues 129 to 345 (NVNPKHTFDN…GALNRVIANA (217 aa)) are domain III, AAA+ region. Residues G173, G175, K176, and T177 each contribute to the ATP site. Residues 346–465 (NFTGRSITID…FSNLIRTLSS (120 aa)) are domain IV, binds dsDNA.

It belongs to the DnaA family. In terms of assembly, oligomerizes as a right-handed, spiral filament on DNA at oriC.

Its subcellular location is the cytoplasm. Functionally, plays an essential role in the initiation and regulation of chromosomal replication. ATP-DnaA binds to the origin of replication (oriC) to initiate formation of the DNA replication initiation complex once per cell cycle. Binds the DnaA box (a 9 base pair repeat at the origin) and separates the double-stranded (ds)DNA. Forms a right-handed helical filament on oriC DNA; dsDNA binds to the exterior of the filament while single-stranded (ss)DNA is stabiized in the filament's interior. The ATP-DnaA-oriC complex binds and stabilizes one strand of the AT-rich DNA unwinding element (DUE), permitting loading of DNA polymerase. After initiation quickly degrades to an ADP-DnaA complex that is not apt for DNA replication. Binds acidic phospholipids. This Pectobacterium carotovorum subsp. carotovorum (strain PC1) protein is Chromosomal replication initiator protein DnaA.